The chain runs to 211 residues: Large ribosomal subunit protein uL3 (211 aa).

At Gln-150 the chain carries N5-methylglutamine.

Belongs to the universal ribosomal protein uL3 family. As to quaternary structure, part of the 50S ribosomal subunit. Forms a cluster with proteins L14 and L19. Methylated by PrmB.

In terms of biological role, one of the primary rRNA binding proteins, it binds directly near the 3'-end of the 23S rRNA, where it nucleates assembly of the 50S subunit. The protein is Large ribosomal subunit protein uL3 of Pseudomonas entomophila (strain L48).